A 218-amino-acid chain; its full sequence is uncharacterized protein (218 aa).

This is an uncharacterized protein from Treponema pallidum (strain Nichols).